We begin with the raw amino-acid sequence, 487 residues long: Glutamyl-tRNA(Gln) amidotransferase subunit A (487 aa).

The Charge relay system role is filled by Lys78. Positions 135–144 (SAYQTTTNPW) are enriched in polar residues. The interval 135–155 (SAYQTTTNPWDASRVPGGSSG) is disordered. The active-site Charge relay system is Ser153. Ser177 (acyl-ester intermediate) is an active-site residue.

It belongs to the amidase family. GatA subfamily. As to quaternary structure, heterotrimer of A, B and C subunits.

It catalyses the reaction L-glutamyl-tRNA(Gln) + L-glutamine + ATP + H2O = L-glutaminyl-tRNA(Gln) + L-glutamate + ADP + phosphate + H(+). Allows the formation of correctly charged Gln-tRNA(Gln) through the transamidation of misacylated Glu-tRNA(Gln) in organisms which lack glutaminyl-tRNA synthetase. The reaction takes place in the presence of glutamine and ATP through an activated gamma-phospho-Glu-tRNA(Gln). This chain is Glutamyl-tRNA(Gln) amidotransferase subunit A, found in Maridesulfovibrio salexigens (strain ATCC 14822 / DSM 2638 / NCIMB 8403 / VKM B-1763) (Desulfovibrio salexigens).